Here is a 608-residue protein sequence, read N- to C-terminus: Dolichyl-diphosphooligosaccharide--protein glycosyltransferase subunit 1 (608 aa).

The signal sequence occupies residues 1 to 24; the sequence is MEAPAVCLLPLLLLLWAWAPAPGR. The Lumenal portion of the chain corresponds to 25–435; sequence ASPEALPLVN…VVHYTFNKVL (411 aa). The residue at position 188 (lysine 188) is an N6-acetyllysine. Asparagine 300 is a glycosylation site (N-linked (GlcNAc...) asparagine). Residues 436-456 traverse the membrane as a helical segment; that stretch reads MLQEPLLVVAAFYILFFTVIV. Residues 457–607 are Cytoplasmic-facing; that stretch reads YVRLDFSITK…VTKIDHILDA (151 aa). Lysine 539 carries the N6-acetyllysine; alternate modification. Lysine 539 participates in a covalent cross-link: Glycyl lysine isopeptide (Lys-Gly) (interchain with G-Cter in SUMO2); alternate.

Belongs to the OST1 family. In terms of assembly, component of the oligosaccharyltransferase (OST) complex. OST exists in two different complex forms which contain common core subunits RPN1, RPN2, OST48, OST4, DAD1 and TMEM258, either STT3A or STT3B as catalytic subunits, and form-specific accessory subunits. STT3A complex assembly occurs through the formation of 3 subcomplexes. Subcomplex 1 contains RPN1 and TMEM258, subcomplex 2 contains the STT3A-specific subunits STT3A, DC2/OSTC, and KCP2 as well as the core subunit OST4, and subcomplex 3 contains RPN2, DAD1, and OST48. The STT3A complex can form stable complexes with the Sec61 complex or with both the Sec61 and TRAP complexes. Interacts with TMEM35A/NACHO. Post-translationally, ubiquitinated by the ECS(ASB11) complex. In terms of processing, ufmylated by UFL1 in response to endoplasmic reticulum stress, promoting reticulophagy of endoplasmic reticulum sheets. Detected in liver (at protein level).

Its subcellular location is the endoplasmic reticulum membrane. It functions in the pathway protein modification; protein glycosylation. Subunit of the oligosaccharyl transferase (OST) complex that catalyzes the initial transfer of a defined glycan (Glc(3)Man(9)GlcNAc(2) in eukaryotes) from the lipid carrier dolichol-pyrophosphate to an asparagine residue within an Asn-X-Ser/Thr consensus motif in nascent polypeptide chains, the first step in protein N-glycosylation. N-glycosylation occurs cotranslationally and the complex associates with the Sec61 complex at the channel-forming translocon complex that mediates protein translocation across the endoplasmic reticulum (ER). All subunits are required for a maximal enzyme activity. The chain is Dolichyl-diphosphooligosaccharide--protein glycosyltransferase subunit 1 from Sus scrofa (Pig).